The sequence spans 158 residues: Protein Smg homolog (158 aa).

The protein belongs to the Smg family.

This is Protein Smg homolog from Herminiimonas arsenicoxydans.